Here is a 631-residue protein sequence, read N- to C-terminus: KIF-binding protein (631 aa).

The segment covering 60–70 (EQGEAGDEADC) has biased composition (acidic residues). Positions 60–88 (EQGEAGDEADCESSQTADGEPEDGFEKTF) are disordered.

This sequence belongs to the KIF-binding protein family. As to expression, at 30 hpf, primarily expressed in central and peripheral neurons.

It is found in the cytoplasm. Its subcellular location is the cytoskeleton. Activator of KIF1B plus-end-directed microtubule motor activity. Required for organization of axonal microtubules, and axonal outgrowth and maintenance during peripheral and central nervous system development. In Danio rerio (Zebrafish), this protein is KIF-binding protein (kifbp).